Reading from the N-terminus, the 513-residue chain is ATP synthase subunit alpha 1 (513 aa).

Residue 169 to 176 participates in ATP binding; that stretch reads GDRQCGKT.

It belongs to the ATPase alpha/beta chains family. As to quaternary structure, F-type ATPases have 2 components, CF(1) - the catalytic core - and CF(0) - the membrane proton channel. CF(1) has five subunits: alpha(3), beta(3), gamma(1), delta(1), epsilon(1). CF(0) has three main subunits: a(1), b(2) and c(9-12). The alpha and beta chains form an alternating ring which encloses part of the gamma chain. CF(1) is attached to CF(0) by a central stalk formed by the gamma and epsilon chains, while a peripheral stalk is formed by the delta and b chains.

It localises to the cell inner membrane. It carries out the reaction ATP + H2O + 4 H(+)(in) = ADP + phosphate + 5 H(+)(out). Its function is as follows. Produces ATP from ADP in the presence of a proton gradient across the membrane. The alpha chain is a regulatory subunit. This chain is ATP synthase subunit alpha 1, found in Burkholderia pseudomallei (strain 1710b).